Reading from the N-terminus, the 77-residue chain is Protein RADIALIS-like 4 (77 aa).

The region spanning 6-61 (MSTSSWTAREDKQFEMALAKFDKDTPDRWQKIARAVGGKSTEEVKRHYELLLRDVN) is the SANT domain.

Expressed just outside the vascular bundles in the rosette stem and the leaf traces. Not detected in floral primordia.

It localises to the nucleus. Functionally, probable transcription factor. The sequence is that of Protein RADIALIS-like 4 (RL4) from Arabidopsis thaliana (Mouse-ear cress).